We begin with the raw amino-acid sequence, 682 residues long: Methionine--tRNA ligase (682 aa).

A 'HIGH' region motif is present at residues Pro14–His24. The Zn(2+) site is built by Cys145, Cys148, Cys158, and Cys161. The short motif at Lys331–Ser335 is the 'KMSKS' region element. Lys334 is a binding site for ATP. One can recognise a tRNA-binding domain in the interval Ala580 to Lys682.

Belongs to the class-I aminoacyl-tRNA synthetase family. MetG type 1 subfamily. In terms of assembly, homodimer. Zn(2+) serves as cofactor.

The protein resides in the cytoplasm. It catalyses the reaction tRNA(Met) + L-methionine + ATP = L-methionyl-tRNA(Met) + AMP + diphosphate. Functionally, is required not only for elongation of protein synthesis but also for the initiation of all mRNA translation through initiator tRNA(fMet) aminoacylation. The polypeptide is Methionine--tRNA ligase (Pseudomonas savastanoi pv. phaseolicola (strain 1448A / Race 6) (Pseudomonas syringae pv. phaseolicola (strain 1448A / Race 6))).